A 278-amino-acid chain; its full sequence is Bifunctional protein FolD (278 aa).

Residues 164 to 166 (GRS) and threonine 228 each bind NADP(+).

The protein belongs to the tetrahydrofolate dehydrogenase/cyclohydrolase family. As to quaternary structure, homodimer.

It carries out the reaction (6R)-5,10-methylene-5,6,7,8-tetrahydrofolate + NADP(+) = (6R)-5,10-methenyltetrahydrofolate + NADPH. It catalyses the reaction (6R)-5,10-methenyltetrahydrofolate + H2O = (6R)-10-formyltetrahydrofolate + H(+). Its pathway is one-carbon metabolism; tetrahydrofolate interconversion. Catalyzes the oxidation of 5,10-methylenetetrahydrofolate to 5,10-methenyltetrahydrofolate and then the hydrolysis of 5,10-methenyltetrahydrofolate to 10-formyltetrahydrofolate. This chain is Bifunctional protein FolD, found in Mycoplasmopsis synoviae (strain 53) (Mycoplasma synoviae).